Reading from the N-terminus, the 143-residue chain is Nucleoside diphosphate kinase (143 aa).

Residues Lys11, Phe59, Arg87, Thr93, Arg104, and Asn114 each coordinate ATP. His117 acts as the Pros-phosphohistidine intermediate in catalysis.

Belongs to the NDK family. In terms of assembly, homotetramer. Mg(2+) serves as cofactor.

It localises to the cytoplasm. The enzyme catalyses a 2'-deoxyribonucleoside 5'-diphosphate + ATP = a 2'-deoxyribonucleoside 5'-triphosphate + ADP. It carries out the reaction a ribonucleoside 5'-diphosphate + ATP = a ribonucleoside 5'-triphosphate + ADP. Its function is as follows. Major role in the synthesis of nucleoside triphosphates other than ATP. The ATP gamma phosphate is transferred to the NDP beta phosphate via a ping-pong mechanism, using a phosphorylated active-site intermediate. The sequence is that of Nucleoside diphosphate kinase from Edwardsiella ictaluri (strain 93-146).